Reading from the N-terminus, the 164-residue chain is Low molecular weight phosphotyrosine protein phosphatase 2 (164 aa).

C14 serves as the catalytic Nucleophile. The active site involves R20. D130 (proton donor) is an active-site residue.

It belongs to the low molecular weight phosphotyrosine protein phosphatase family. Cone cells and primary pigment cells in developing pupal retina.

The protein resides in the cytoplasm. The enzyme catalyses O-phospho-L-tyrosyl-[protein] + H2O = L-tyrosyl-[protein] + phosphate. It catalyses the reaction a phosphate monoester + H2O = an alcohol + phosphate. Its function is as follows. Catalyzes the dephosphorylation of tyrosine phosphorylated proteins and low-MW aryl phosphates. Can contribute to the regulation of a variety of developmental processes. This is Low molecular weight phosphotyrosine protein phosphatase 2 (primo-2) from Drosophila melanogaster (Fruit fly).